Here is a 139-residue protein sequence, read N- to C-terminus: Histone H2B (139 aa).

Residues 1-10 (MAPKAAEKKP) show a composition bias toward basic and acidic residues. Positions 1 to 47 (MAPKAAEKKPSTGGKAPAGGKAPAEKKEAGKKTAASGEKKKRTKARK) are disordered. Residues Lys-8 and Lys-9 each carry the N6-acetyllysine; alternate modification. Residues Lys-8 and Lys-9 each participate in a glycyl lysine isopeptide (Lys-Gly) (interchain with G-Cter in SUMO); alternate cross-link. Residues 11–22 (STGGKAPAGGKA) are compositionally biased toward low complexity. Residue Lys-15 is modified to N6-acetyllysine. Lys-26 is subject to N6-acetyllysine; alternate. Lys-26 participates in a covalent cross-link: Glycyl lysine isopeptide (Lys-Gly) (interchain with G-Cter in SUMO); alternate. A Glycyl lysine isopeptide (Lys-Gly) (interchain with G-Cter in SUMO) cross-link involves residue Lys-27. Lys-133 is covalently cross-linked (Glycyl lysine isopeptide (Lys-Gly) (interchain with G-Cter in ubiquitin)).

It belongs to the histone H2B family. In terms of assembly, the nucleosome is a histone octamer containing two molecules each of H2A, H2B, H3 and H4 assembled in one H3-H4 heterotetramer and two H2A-H2B heterodimers. The octamer wraps approximately 147 bp of DNA. Monoubiquitinated by the UBC2-BRE1 complex to form H2BK123ub1. H2BK123ub1 gives a specific tag for epigenetic transcriptional activation and is also prerequisite for H3K4me and H3K79me formation. H2BK123ub1 also modulates the formation of double-strand breaks during meiosis and is a prerequisite for DNA-damage checkpoint activation. In terms of processing, acetylated by GCN5 to form H2BK11ac and H2BK16ac. H2BK16ac can also be formed by ESA1. Acetylation of N-terminal lysines and particularly formation of H2BK11acK16ac has a positive effect on transcription. Post-translationally, sumoylation to form H2BK6su or H2BK7su, and probably also H2BK16su or H2BK17su, occurs preferentially near the telomeres and represses gene transcription.

It localises to the nucleus. It is found in the chromosome. In terms of biological role, core component of nucleosome. Nucleosomes wrap and compact DNA into chromatin, limiting DNA accessibility to the cellular machineries which require DNA as a template. Histones thereby play a central role in transcription regulation, DNA repair, DNA replication and chromosomal stability. DNA accessibility is regulated via a complex set of post-translational modifications of histones, also called histone code, and nucleosome remodeling. In Coccidioides immitis (strain RS) (Valley fever fungus), this protein is Histone H2B (HTB1).